The following is a 126-amino-acid chain: MSNMIVLIIFAAFIIYMIASYVYQQRIMKTLTEEEFRAGYRKAQLIDVREPNEFEGGHILGARNIPLSQLKQRKNEIRTDKPVYLYCQNSVRSGRAAQTLRKNGCTEIYNLKGGFKKWGGKIKAKK.

A helical transmembrane segment spans residues 3–23 (NMIVLIIFAAFIIYMIASYVY). Residues 39 to 123 (GYRKAQLIDV…GFKKWGGKIK (85 aa)) enclose the Rhodanese domain.

The protein resides in the cell membrane. This is an uncharacterized protein from Bacillus subtilis (strain 168).